Consider the following 164-residue polypeptide: Cyclin-dependent kinase inhibitor 1 (164 aa).

An N-acetylserine modification is found at S2. A Glycyl serine ester (Ser-Gly) (interchain with G-Cter in ubiquitin) cross-link involves residue S2. A C4-type zinc finger spans residues H13 to C41. The tract at residues A17–P24 is required for binding cyclins. Residues F53 to P58 form a required for binding CDKs region. Residues A80–P164 are disordered. S114 carries the phosphoserine; by GSK3-beta modification. Residue S130 is modified to Phosphoserine. The short motif at R140–P164 is the PIP-box K+4 motif element. The short motif at K141–R156 is the Nuclear localization signal element. At T145 the chain carries Phosphothreonine; by PKA, PKB/AKT1, PIM1 and PIM2. S146 bears the Phosphoserine; by PKC and NUAK1 mark. The interaction with TRIM39 stretch occupies residues H152–P164. The span at S153 to P164 shows a compositional bias: basic residues. S160 is subject to Phosphoserine.

It belongs to the CDI family. As to quaternary structure, interacts with HDAC1; the interaction is prevented by competitive binding of C10orf90/FATS to HDAC1 facilitating acetylation and protein stabilization of CDKN1A/p21. Interacts with MKRN1. Interacts with PSMA3. Interacts with PCNA. Component of the ternary complex, cyclin D-CDK4-CDKN1A. Interacts (via its N-terminal domain) with CDK4; the interaction promotes the assembly of the cyclin D-CDK4 complex, its nuclear translocation and promotes the cyclin D-dependent enzyme activity of CDK4. Binding to CDK2 leads to CDK2/cyclin E inactivation at the G1-S phase DNA damage checkpoint, thereby arresting cells at the G1-S transition during DNA repair. Interacts with PIM1. Interacts with STK11 and NUAK1. Interacts with DTL and TRIM39. Interacts with PKP3; the interaction sequesters CDKN1A to the cytoplasm thereby repressing its role as an inhibitor of CDK4- and CDK6-driven RB1 phosphorylation. Phosphorylation of Thr-145 by Akt or of Ser-146 by PKC impairs binding to PCNA. Phosphorylation at Ser-114 by GSK3-beta enhances ubiquitination by the DCX(DTL) complex. Phosphorylation of Thr-145 by PIM2 enhances protein stability and inhibits cell proliferation. Phosphorylation of Thr-145 by PIM1 results in the relocation of CDKN1A to the cytoplasm and enhanced CDKN1A protein stability. UV radiation-induced phosphorylation at Ser-146 by NUAK1 leads to its degradation. In terms of processing, ubiquitinated by MKRN1; leading to polyubiquitination and 26S proteasome-dependent degradation. Ubiquitinated by the DCX(DTL) complex, also named CRL4(CDT2) complex, leading to its degradation during S phase or following UV irradiation. Ubiquitination by the DCX(DTL) complex is essential to control replication licensing and is PCNA-dependent: interacts with PCNA via its PIP-box, while the presence of the containing the 'K+4' motif in the PIP box, recruit the DCX(DTL) complex, leading to its degradation. Ubiquitination at Ser-2 leads to degradation by the proteasome pathway. Ubiquitinated by RNF114; leading to proteasomal degradation. Post-translationally, acetylation leads to protein stability. Acetylated in vitro on Lys-141, Lys-154, Lys-161 and Lys-163. Deacetylation by HDAC1 is prevented by competitive binding of C10orf90/FATS to HDAC1.

The protein resides in the cytoplasm. The protein localises to the nucleus. Its function is as follows. May be involved in p53/TP53 mediated inhibition of cellular proliferation in response to DNA damage. Binds to and inhibits cyclin-dependent kinase activity, preventing phosphorylation of critical cyclin-dependent kinase substrates and blocking cell cycle progression. Functions in the nuclear localization and assembly of cyclin D-CDK4 complex and promotes its kinase activity towards RB1. At higher stoichiometric ratios, inhibits the kinase activity of the cyclin D-CDK4 complex. Inhibits DNA synthesis by DNA polymerase delta by competing with POLD3 for PCNA binding. Plays an important role in controlling cell cycle progression and DNA damage-induced G2 arrest. Negatively regulates the CDK4- and CDK6-driven phosphorylation of RB1 in keratinocytes, thereby resulting in the release of E2F1 and subsequent transcription of E2F1-driven G1/S phase promoting genes. The polypeptide is Cyclin-dependent kinase inhibitor 1 (CDKN1A) (Felis catus (Cat)).